Here is a 368-residue protein sequence, read N- to C-terminus: 4-hydroxy-3-methylbut-2-en-1-yl diphosphate synthase (flavodoxin) (368 aa).

Cys-271, Cys-274, Cys-306, and Glu-313 together coordinate [4Fe-4S] cluster.

Belongs to the IspG family. The cofactor is [4Fe-4S] cluster.

It catalyses the reaction (2E)-4-hydroxy-3-methylbut-2-enyl diphosphate + oxidized [flavodoxin] + H2O + 2 H(+) = 2-C-methyl-D-erythritol 2,4-cyclic diphosphate + reduced [flavodoxin]. The protein operates within isoprenoid biosynthesis; isopentenyl diphosphate biosynthesis via DXP pathway; isopentenyl diphosphate from 1-deoxy-D-xylulose 5-phosphate: step 5/6. Functionally, converts 2C-methyl-D-erythritol 2,4-cyclodiphosphate (ME-2,4cPP) into 1-hydroxy-2-methyl-2-(E)-butenyl 4-diphosphate. This chain is 4-hydroxy-3-methylbut-2-en-1-yl diphosphate synthase (flavodoxin), found in Haemophilus influenzae (strain PittGG).